Reading from the N-terminus, the 638-residue chain is MNLEKLSKPELLTLFSILEGELEARDLVIEALKAQHRDTFIEERYGKYNISDPLMALQRDFETLKEKNDSEKQPVCTNPLSVLKAVMKQCKNMQERMLSQLAAAESRHRKVILDLEEERQRHAQDTAEGDDVTYMLEKERERLTQQLEFEKSQVKKFEKEQKKLSSQLEEERTRHKQLSSMLVLECRKATSKAAEEGQKAGELSLKLDKEKSRASKLEEELAAERKRGLQTEAQVEKQLSEFDIEREQLRAKLNREENRTRALKEEVESLKKLVKDLEAAQQHRSTSEQGREPVTMSRGTATEPPMRVSAFCQTESVQTERSHGSVITKLTDTGLPGPTTAAYSYAKANGHCDPEIQTTRELTSDSSTENQGPPREKSAVAAQEKPVENGGCPVGTETPVTMPSHLPSSGSSLSPSSTASSSLTSSPCSSPVLTKRLLGSAASSPGYQSSYQVGINQRFHAARHKFQSQADQDQQASGLQSPPSRDLSPTLLDNSAAKQLARNTVTQVLSRFTNQGPIKPVSPNSSPFGTDYRNLASTASPRGDTSHSPTPGKVSSPLSPLSPGIKSPTIPRAERGNPPPIPPKKPGLTPSQSATTPVTKTHSQASSLAATEDLASSCSPSAVVANGKDVEILLPTSS.

Residues 87 to 284 (MKQCKNMQER…KDLEAAQQHR (198 aa)) adopt a coiled-coil conformation. Disordered stretches follow at residues 280–303 (AQQH…TATE), 360–430 (RELT…PCSS), 463–490 (RHKF…LSPT), and 514–621 (NQGP…CSPS). S285 bears the Phosphoserine mark. Over residues 360 to 371 (RELTSDSSTENQ) the composition is skewed to polar residues. Composition is skewed to low complexity over residues 401 to 430 (TMPS…PCSS) and 467 to 477 (QSQADQDQQAS). Residues S481, S488, S522, S526, S559, S562, and S567 each carry the phosphoserine modification. Positions 514 to 528 (NQGPIKPVSPNSSPF) are enriched in polar residues. T569 and T589 each carry phosphothreonine. A compositionally biased stretch (polar residues) spans 589 to 620 (TPSQSATTPVTKTHSQASSLAATEDLASSCSP). At S591 the chain carries Phosphoserine.

In terms of assembly, interacts with CTTN/cortactin; this interaction may redistribute CTTN to stress fibers. May form homomers. Associates with the core of STRIPAK complexes composed of PP2A catalytic and scaffolding subunits, the striatins (PP2A regulatory subunits), the striatin-associated proteins MOB4, STRIP1 and STRIP2, PDCD10 and members of the STE20 kinases, such as STK24 and STK26. As to expression, predominantly expressed in skin, also detectable in spleen and lung (at protein level). Very low levels, if any, in brain (at protein level).

The protein localises to the cell projection. The protein resides in the lamellipodium. It is found in the cytoplasm. It localises to the cytoskeleton. Its subcellular location is the stress fiber. Functionally, regulates lamellipodial actin dynamics in a CTTN-dependent manner. Associates with core striatin-interacting phosphatase and kinase (STRIPAK) complex to form CTTNBP2NL-STRIPAK complexes. STRIPAK complexes have critical roles in protein (de)phosphorylation and are regulators of multiple signaling pathways including Hippo, MAPK, nuclear receptor and cytoskeleton remodeling. Different types of STRIPAK complexes are involved in a variety of biological processes such as cell growth, differentiation, apoptosis, metabolism and immune regulation. This Mus musculus (Mouse) protein is CTTNBP2 N-terminal-like protein (Cttnbp2nl).